Here is a 235-residue protein sequence, read N- to C-terminus: Phosphoribosylaminoimidazole-succinocarboxamide synthase (235 aa).

It belongs to the SAICAR synthetase family.

It carries out the reaction 5-amino-1-(5-phospho-D-ribosyl)imidazole-4-carboxylate + L-aspartate + ATP = (2S)-2-[5-amino-1-(5-phospho-beta-D-ribosyl)imidazole-4-carboxamido]succinate + ADP + phosphate + 2 H(+). The protein operates within purine metabolism; IMP biosynthesis via de novo pathway; 5-amino-1-(5-phospho-D-ribosyl)imidazole-4-carboxamide from 5-amino-1-(5-phospho-D-ribosyl)imidazole-4-carboxylate: step 1/2. In Clostridium botulinum (strain Alaska E43 / Type E3), this protein is Phosphoribosylaminoimidazole-succinocarboxamide synthase.